The following is a 174-amino-acid chain: Flavodoxin (174 aa).

Residues 4–165 form the Flavodoxin-like domain; that stretch reads VGLFYGSDTG…RVEKWCKQIY (162 aa).

It belongs to the flavodoxin family. It depends on FMN as a cofactor.

In terms of biological role, low-potential electron donor to a number of redox enzymes. The chain is Flavodoxin (fldA) from Haemophilus influenzae (strain ATCC 51907 / DSM 11121 / KW20 / Rd).